The chain runs to 503 residues: Zinc metalloproteinase nas-14 (503 aa).

Residues 1 to 25 (MRLLYSLFHCSAFLVGFTLSVGVLP) form the signal peptide. Residues 116-312 (NLVTYPDKLW…KKVNKLYQCG (197 aa)) enclose the Peptidase M12A domain. Disulfide bonds link Cys-158-Cys-311 and Cys-182-Cys-202. N-linked (GlcNAc...) asparagine glycosylation occurs at Asn-192. His-210 provides a ligand contact to Zn(2+). Residue Glu-211 is part of the active site. Zn(2+) contacts are provided by His-214 and His-220. Over residues 317–340 (TSSTTTTTTTTTTTTTTEEPTTTT) the composition is skewed to low complexity. The segment at 317–377 (TSSTTTTTTT…TPKPVERSRN (61 aa)) is disordered. The span at 342–351 (VEEKPKDKKV) shows a compositional bias: basic and acidic residues. The span at 352–370 (SSTTTTTKKPTTTTTTTPK) shows a compositional bias: low complexity. Cystine bridges form between Cys-380–Cys-414, Cys-387–Cys-407, and Cys-396–Cys-411. Positions 380–414 (CEDLNAHCGMWEQLGHCQHSVKYMAHYCRKACNLC) constitute a ShKT 1 domain. Positions 422–464 (TTTTPKPVPRNKEKENKSASSTTRGTSTATSTTPKTTTTTTSA) are disordered. Asn-437 carries N-linked (GlcNAc...) asparagine glycosylation. Low complexity predominate over residues 439–464 (SASSTTRGTSTATSTTPKTTTTTTSA). Cystine bridges form between Cys-469–Cys-503, Cys-476–Cys-496, and Cys-485–Cys-500. The region spanning 469–503 (CEDKNLFCSYWAKIGECNSESKFMKIFCKASCGKC) is the ShKT 2 domain.

Zn(2+) is required as a cofactor. As to expression, expressed in pharyngeal muscles and mc cells.

It localises to the secreted. Functionally, metalloprotease. The sequence is that of Zinc metalloproteinase nas-14 (nas-14) from Caenorhabditis elegans.